We begin with the raw amino-acid sequence, 340 residues long: Ketol-acid reductoisomerase (NADP(+)) (340 aa).

In terms of domain architecture, KARI N-terminal Rossmann spans 1 to 183 (MAITVYYDKD…GGGRTGIIET (183 aa)). NADP(+)-binding positions include 26–29 (FGSQ), Arg-49, Ser-52, Ser-54, and 84–87 (DEIQ). Residue His-109 is part of the active site. NADP(+) is bound at residue Gly-135. The KARI C-terminal knotted domain occupies 184-329 (TFKAETETDL…RNLRAMMPWI (146 aa)). Positions 192, 196, 228, and 232 each coordinate Mg(2+). Ser-253 contributes to the substrate binding site.

The protein belongs to the ketol-acid reductoisomerase family. Mg(2+) serves as cofactor.

The enzyme catalyses (2R)-2,3-dihydroxy-3-methylbutanoate + NADP(+) = (2S)-2-acetolactate + NADPH + H(+). It carries out the reaction (2R,3R)-2,3-dihydroxy-3-methylpentanoate + NADP(+) = (S)-2-ethyl-2-hydroxy-3-oxobutanoate + NADPH + H(+). The protein operates within amino-acid biosynthesis; L-isoleucine biosynthesis; L-isoleucine from 2-oxobutanoate: step 2/4. It participates in amino-acid biosynthesis; L-valine biosynthesis; L-valine from pyruvate: step 2/4. Involved in the biosynthesis of branched-chain amino acids (BCAA). Catalyzes an alkyl-migration followed by a ketol-acid reduction of (S)-2-acetolactate (S2AL) to yield (R)-2,3-dihydroxy-isovalerate. In the isomerase reaction, S2AL is rearranged via a Mg-dependent methyl migration to produce 3-hydroxy-3-methyl-2-ketobutyrate (HMKB). In the reductase reaction, this 2-ketoacid undergoes a metal-dependent reduction by NADPH to yield (R)-2,3-dihydroxy-isovalerate. The sequence is that of Ketol-acid reductoisomerase (NADP(+)) from Campylobacter jejuni subsp. jejuni serotype O:6 (strain 81116 / NCTC 11828).